The sequence spans 429 residues: TNFAIP3-interacting protein 2 (429 aa).

Ser7 carries the post-translational modification Phosphoserine. Positions 29 to 117 form a coiled coil; that stretch reads QRLRRLQDQL…MQQLLSQPQH (89 aa). A compositionally biased stretch (basic and acidic residues) spans 177-195; the sequence is HAQRNVGERSPDQSEHTDG. Residues 177–199 form a disordered region; sequence HAQRNVGERSPDQSEHTDGHTSV. Coiled-coil stretches lie at residues 196–226 and 255–340; these read HTSVQSVIEKLQEENRLLKQKVTHVEDLNAK and ELMR…QVSW. The segment at 289 to 347 is ubiquitin-binding domain (UBD); it reads RDAALERVQMLEQQILAYKDDFMSERADRERAQSRIQELEEKVASLLHQVSWRQDSREP. Residues 372-400 form a disordered region; the sequence is PGGWRPGTGSQQPEPPAEGGHPGAAQRGQ. A compositionally biased stretch (low complexity) spans 388–397; the sequence is AEGGHPGAAQ. A CCHC NOA-type zinc finger spans residues 397 to 429; the sequence is QRGQGDLQCPHCLQCFSDEQGEELLRHVAECCQ. Residues Cys405, Cys408, His423, and Cys427 each coordinate Zn(2+).

Interacts with STK11/LKB1, TNFAIP3, IKBKG, NFKB1, MAP3K8, TEK, RIPK1, CHUK, IKBKB and SMARCD1. Interacts with polyubiquitin. As to quaternary structure, (Microbial infection) Interacts with severe fever with thrombocytopenia syndrome virus (SFTSV) NSs; this interaction promotes TPL2 complex formation and signaling activity leading to IL-10 production. In terms of processing, in vitro phosphorylated by CHUK. Post-translationally, ubiquitinated; undergoes 'Lys-48'-linked polyubiquitination probably leading to constitutive proteasomal degradation which can be impaired by IKK-A/CHUK or IKBKB probably involving deubiquitination. Deubiquitinated by USP35; leading to stabilization and inhibition of TNFalpha-induced NF-kappa-B activation. As to expression, ubiquitously expressed in all tissues examined.

The protein resides in the cytoplasm. It localises to the nucleus. In terms of biological role, inhibits NF-kappa-B activation by blocking the interaction of RIPK1 with its downstream effector NEMO/IKBKG. Forms a ternary complex with NFKB1 and MAP3K8 but appears to function upstream of MAP3K8 in the TLR4 signaling pathway that regulates MAP3K8 activation. Involved in activation of the MEK/ERK signaling pathway during innate immune response; this function seems to be stimulus- and cell type specific. Required for stability of MAP3K8. Involved in regulation of apoptosis in endothelial cells; promotes TEK agonist-stimulated endothelial survival. May act as transcriptional coactivator when translocated to the nucleus. Enhances CHUK-mediated NF-kappa-B activation involving NF-kappa-B p50-p65 and p50-c-Rel complexes. This Homo sapiens (Human) protein is TNFAIP3-interacting protein 2.